Here is a 51-residue protein sequence, read N- to C-terminus: Sperm protamine P1 (51 aa).

The protein belongs to the protamine P1 family. As to expression, testis.

It is found in the nucleus. It localises to the chromosome. In terms of biological role, protamines substitute for histones in the chromatin of sperm during the haploid phase of spermatogenesis. They compact sperm DNA into a highly condensed, stable and inactive complex. The sequence is that of Sperm protamine P1 (PRM1) from Nasalis larvatus (Proboscis monkey).